The primary structure comprises 352 residues: NAD(+)-dependent homoserine dehydrogenase (352 aa).

Belongs to the homoserine dehydrogenase family.

The catalysed reaction is L-homoserine + NAD(+) = L-aspartate 4-semialdehyde + NADH + H(+). Its function is as follows. Dehydrogenase involved in the degradation of canavanine, the delta-oxa-analog of arginine, allowing growth on canavanine as sole nitrogen and carbon source. Catalyzes the conversion of homoserine and NAD(+) to aspartate-semialdehyde and NADH. Is highly specific for NAD(+) and cannot use NADP(+). The sequence is that of NAD(+)-dependent homoserine dehydrogenase from Pseudomonas canavaninivorans.